Consider the following 162-residue polypeptide: Corticoliberin-1 (162 aa).

The N-terminal stretch at 1–24 (MKLNFLVTTVALLVAFPPPYECRA) is a signal peptide. Positions 25–119 (IDSSSNQPAT…ALDSEERERR (95 aa)) are excised as a propeptide. Position 160 is a phenylalanine amide (Phe160).

This sequence belongs to the sauvagine/corticotropin-releasing factor/urotensin I family.

Its subcellular location is the secreted. Its function is as follows. This hormone from hypothalamus regulates the release of corticotropin from pituitary gland. This is Corticoliberin-1 (crf1) from Catostomus commersonii (White sucker).